Reading from the N-terminus, the 169-residue chain is Peptide deformylase (169 aa).

Cys-91 and His-133 together coordinate Fe cation. The active site involves Glu-134. His-137 provides a ligand contact to Fe cation.

The protein belongs to the polypeptide deformylase family. Fe(2+) serves as cofactor.

The enzyme catalyses N-terminal N-formyl-L-methionyl-[peptide] + H2O = N-terminal L-methionyl-[peptide] + formate. In terms of biological role, removes the formyl group from the N-terminal Met of newly synthesized proteins. Requires at least a dipeptide for an efficient rate of reaction. N-terminal L-methionine is a prerequisite for activity but the enzyme has broad specificity at other positions. In Salmonella agona (strain SL483), this protein is Peptide deformylase.